We begin with the raw amino-acid sequence, 1135 residues long: Putative beta-hexosaminidase (1135 aa).

The N-terminal stretch at 1-23 (MKWVKSGVGILGILLTICHAVTS) is a signal peptide. Disordered stretches follow at residues 970–1082 (AHPP…LPGQ) and 1107–1135 (QMRG…QQAG). Positions 986 to 1003 (NMPPPFPPRPPFGPPMLP) are enriched in pro residues. Composition is skewed to low complexity over residues 1004-1026 (PGQM…TALG) and 1043-1073 (TGQA…LPGQ).

Belongs to the glycosyl hydrolase 20 family. As to expression, prismatic layer of shell (at protein level). Expressed primarily in the mantle with highest level in the mantle edge and lower level in the mantle pallium.

The protein resides in the secreted. The enzyme catalyses Hydrolysis of terminal non-reducing N-acetyl-D-hexosamine residues in N-acetyl-beta-D-hexosaminides.. Its pathway is glycan degradation; chitin degradation. The protein is Putative beta-hexosaminidase of Margaritifera margaritifera (Freshwater pearl mussel).